Reading from the N-terminus, the 153-residue chain is 3-hydroxyacyl-[acyl-carrier-protein] dehydratase FabZ (153 aa).

Residue His54 is part of the active site.

The protein belongs to the thioester dehydratase family. FabZ subfamily.

Its subcellular location is the cytoplasm. It catalyses the reaction a (3R)-hydroxyacyl-[ACP] = a (2E)-enoyl-[ACP] + H2O. In terms of biological role, involved in unsaturated fatty acids biosynthesis. Catalyzes the dehydration of short chain beta-hydroxyacyl-ACPs and long chain saturated and unsaturated beta-hydroxyacyl-ACPs. The protein is 3-hydroxyacyl-[acyl-carrier-protein] dehydratase FabZ of Shewanella amazonensis (strain ATCC BAA-1098 / SB2B).